The primary structure comprises 198 residues: Putative manganese efflux pump MntP (198 aa).

6 helical membrane-spanning segments follow: residues 3–23, 37–57, 65–85, 105–127, 131–153, and 171–191; these read SIELLIIAVGLSMDAFAVAIC, VLTGCFFGGFQALMPLLGYLL, ITSIDHWIAFGLLSLIGINMI, SLTVMAFATSIDALAIGVTFAFL, IIPAVTMIGITTFTFSFLGVKIG, and ILIGMGCKILFDHLGVISFVF.

The protein belongs to the MntP (TC 9.B.29) family.

Its subcellular location is the cell membrane. Its function is as follows. Probably functions as a manganese efflux pump. This is Putative manganese efflux pump MntP from Acetivibrio thermocellus (strain ATCC 27405 / DSM 1237 / JCM 9322 / NBRC 103400 / NCIMB 10682 / NRRL B-4536 / VPI 7372) (Clostridium thermocellum).